Consider the following 538-residue polypeptide: Cytochrome P450 monooxygenase okaG (538 aa).

The chain crosses the membrane as a helical span at residues 3 to 23 (LISPLAAVLSAMAIVLGLLFF). Heme is bound at residue C484.

This sequence belongs to the cytochrome P450 family. Requires heme as cofactor.

It localises to the membrane. It catalyses the reaction 12-deshydroxyl okaramine E + 2 reduced [NADPH--hemoprotein reductase] + 2 O2 = 3-desmethyl okaramine B + 2 oxidized [NADPH--hemoprotein reductase] + 2 H2O + 2 H(+). It participates in alkaloid biosynthesis. Its function is as follows. Nonribosomal peptide synthetase; part of the gene cluster that mediates the biosynthesis of okaramine B, a prenylated indole alkaloid that possesses an unusual octacyclic ring system, including a four-membered azetidine ring and an eight-membered azocine ring, and that exhibits insecticidal activity against silkworm larvae. Within the pathway, okaG acts as a 2,3-diol synthase that installs 2,3-diol on the okaramine scaffold to convert 12-deshydroxyl okaramine E into 3-desmethyl okaramine B. OkaG is also able to produce use okaramine E and produce okaramine D with the help of the methyltransferase okaF. The biosynthesis begins with the NRPS okaA that condenses two tryptophan molecules into cyclo(L-Trp-L-Trp). Prenylation by the prenyltransferase okaC then leads to the formation of cyclo(N8-(alpha,alpha-dimethylallyl)-L-Trp-6a-(alpha,alpha-dime-thylallyl)-L-Trp). This is followed by indole 2,3-epoxidation by the FAD-dependent monooxygenase okaB to facilitate the formation of the hexahydropyrrolo[2,3-b]indole (HPI) moiety of okaramine C. The cytochrome P450 monooxygenase okaD then likely catalyzes formation of the eight-membered ring of okaramine A. The dioxygenase okaE further forms the unusual 2-dimethyl-3-methyl-azetidine ring to yield 12-deshydroxyl okaramine E, as well as the hydroxylation of 12-deshydroxyl okaramine E to produce okaramine E. The cytochrome P450 monoxygenase okaG converts 12-deshydroxyl okaramine E into 3-desmethyl okaramine B which is further methylated by the methyltransferase okaF into okaramine B. In a shunt pathway, okaG and okaF together are also able to convert okaramine E into okaramine D. Okaramine H is produced by nonenzymatic conversion from okaramine A. The sequence is that of Cytochrome P450 monooxygenase okaG from Penicillium ochrochloron.